The primary structure comprises 952 residues: Pentatricopeptide repeat-containing protein At5g04810, chloroplastic (952 aa).

A chloroplast-targeting transit peptide spans Met-1–Gly-60. 2 disordered regions span residues Ser-30–Leu-95 and Leu-115–Gln-163. The segment covering Gln-37 to Pro-49 has biased composition (pro residues). Residues Ser-58–Pro-68 are compositionally biased toward low complexity. Over residues Ser-122–Val-133 the composition is skewed to pro residues. Positions Thr-137 to Gln-163 are enriched in basic and acidic residues. An RRM domain is found at Ile-167–Val-238. Over residues Glu-259 to Arg-280 the composition is skewed to basic and acidic residues. The interval Glu-259 to Lys-281 is disordered. PPR repeat units lie at residues Ser-308–Pro-342, Thr-343–Met-377, Ser-378–Leu-412, Asn-413–Ala-447, Pro-448–Pro-482, Thr-483–His-517, Asn-518–Pro-552, Asp-553–Pro-587, Thr-588–Pro-622, Thr-623–Ala-657, Asn-658–Val-692, Asp-693–Arg-727, Asn-728–Pro-762, Asp-763–Pro-797, and Asn-798–Pro-832. Positions Asp-918–Lys-952 are disordered. The span at Ser-921–Val-941 shows a compositional bias: acidic residues.

It belongs to the PPR family. P subfamily.

The protein resides in the plastid. It localises to the chloroplast. Functionally, may play a role in the plastid ribosome biogenesis. The chain is Pentatricopeptide repeat-containing protein At5g04810, chloroplastic (PPR4) from Arabidopsis thaliana (Mouse-ear cress).